The sequence spans 512 residues: Citrate synthase (512 aa).

Catalysis depends on residues His-288, His-327, and Asp-383. The disordered stretch occupies residues 483-512 (AIPKTATGSKSQLSASIEQSFGEKISPQSH). The segment covering 488–501 (ATGSKSQLSASIEQ) has biased composition (polar residues).

This sequence belongs to the citrate synthase family.

The protein localises to the cytoplasm. The catalysed reaction is oxaloacetate + acetyl-CoA + H2O = citrate + CoA + H(+). It functions in the pathway carbohydrate metabolism; tricarboxylic acid cycle; isocitrate from oxaloacetate: step 1/2. This Dictyostelium discoideum (Social amoeba) protein is Citrate synthase (gltA).